We begin with the raw amino-acid sequence, 466 residues long: Ribulose bisphosphate carboxylase large chain (466 aa).

Lysine 5 bears the N6,N6,N6-trimethyllysine mark. Asparagine 114 and threonine 164 together coordinate substrate. The active-site Proton acceptor is lysine 166. Lysine 168 is a substrate binding site. The Mg(2+) site is built by lysine 192, aspartate 194, and glutamate 195. Lysine 192 is subject to N6-carboxylysine. The active-site Proton acceptor is the histidine 285. Substrate-binding residues include arginine 286, histidine 318, and serine 370.

It belongs to the RuBisCO large chain family. Type I subfamily. As to quaternary structure, heterohexadecamer of 8 large chains and 8 small chains; disulfide-linked. The disulfide link is formed within the large subunit homodimers. The cofactor is Mg(2+). In terms of processing, the disulfide bond which can form in the large chain dimeric partners within the hexadecamer appears to be associated with oxidative stress and protein turnover.

It is found in the plastid. Its subcellular location is the chloroplast. The enzyme catalyses 2 (2R)-3-phosphoglycerate + 2 H(+) = D-ribulose 1,5-bisphosphate + CO2 + H2O. The catalysed reaction is D-ribulose 1,5-bisphosphate + O2 = 2-phosphoglycolate + (2R)-3-phosphoglycerate + 2 H(+). In terms of biological role, ruBisCO catalyzes two reactions: the carboxylation of D-ribulose 1,5-bisphosphate, the primary event in carbon dioxide fixation, as well as the oxidative fragmentation of the pentose substrate in the photorespiration process. Both reactions occur simultaneously and in competition at the same active site. The protein is Ribulose bisphosphate carboxylase large chain of Aesculus pavia (Red buckeye).